Here is a 123-residue protein sequence, read N- to C-terminus: Holo-[acyl-carrier-protein] synthase (123 aa).

Positions 8 and 50 each coordinate Mg(2+).

The protein belongs to the P-Pant transferase superfamily. AcpS family. It depends on Mg(2+) as a cofactor.

It localises to the cytoplasm. The enzyme catalyses apo-[ACP] + CoA = holo-[ACP] + adenosine 3',5'-bisphosphate + H(+). Functionally, transfers the 4'-phosphopantetheine moiety from coenzyme A to a Ser of acyl-carrier-protein. This Kocuria rhizophila (strain ATCC 9341 / DSM 348 / NBRC 103217 / DC2201) protein is Holo-[acyl-carrier-protein] synthase.